Reading from the N-terminus, the 814-residue chain is Putative E3 ubiquitin-protein ligase RF298 (814 aa).

Disordered regions lie at residues 1–51 (MVEK…ASLT), 221–301 (SVSN…TKSA), and 411–441 (ALPA…STKP). Over residues 221-231 (SVSNASKSSES) the composition is skewed to low complexity. Polar residues predominate over residues 289-301 (SVSTASGEGTKSA). Over residues 423–435 (SEKKSGSEPEEKP) the composition is skewed to basic and acidic residues. Residues 506-710 (ELKALRKEKE…KLKSDSLKIA (205 aa)) adopt a coiled-coil conformation. The RING-type zinc-finger motif lies at 760–800 (CVMCLSEEMSVIFLPCAHQVLCSKCNQLHEKEAMEDCPSCR).

Belongs to the RING-type zinc finger family.

It catalyses the reaction S-ubiquitinyl-[E2 ubiquitin-conjugating enzyme]-L-cysteine + [acceptor protein]-L-lysine = [E2 ubiquitin-conjugating enzyme]-L-cysteine + N(6)-ubiquitinyl-[acceptor protein]-L-lysine.. It participates in protein modification; protein ubiquitination. The chain is Putative E3 ubiquitin-protein ligase RF298 (RF298) from Arabidopsis thaliana (Mouse-ear cress).